The sequence spans 240 residues: Transcription factor bHLH47 (240 aa).

Polar residues predominate over residues 1 to 13 (MVSKTPSTSSDEA). Residues 1–26 (MVSKTPSTSSDEANATADERCRKGKV) form a disordered region. The bHLH domain maps to 27 to 77 (PKRINKAVRERLKREHLNELFIELADTLELNQQNSGKASILCEATRFLKDV). Residues 98–131 (VTTEKNELKEETSVLETEISKLQNEIEARANQSK) are a coiled coil. A compositionally biased stretch (polar residues) spans 128–138 (NQSKPDLNTSP). The interval 128–153 (NQSKPDLNTSPAPEYHHHHYQQQHPE) is disordered.

In terms of assembly, homodimer. Forms heterodimer with PYEL proteins bHLH115, bHLH104 and ILR3. In terms of tissue distribution, expressed constitutively in roots, leaves, stems, and flowers.

Its subcellular location is the nucleus. In Arabidopsis thaliana (Mouse-ear cress), this protein is Transcription factor bHLH47 (BHLH47).